The sequence spans 234 residues: MNMNADPAELQKFSELAHRWWDTTSEFKPLHEINPLRLDWIDRNAGLAGKRVLDIGCGGGILSESMAAAGAHVTGIDLSEKALGVARLHLFESGQKVDYHHASAEEFAAQHAGEFDIVTCMEMLEHVPDPASTVAACAQLVRPGGQVFFSTINRNFKAYLFAVLGAEYILKLLPRGTHDYVKFIRPSELARYCRQAGLETAELLGMSYNPLTQVYSLGNDTDVNYLVHAKQAVS.

S-adenosyl-L-methionine contacts are provided by R37, G56, D77, and M121.

It belongs to the methyltransferase superfamily. UbiG/COQ3 family.

It carries out the reaction a 3-demethylubiquinol + S-adenosyl-L-methionine = a ubiquinol + S-adenosyl-L-homocysteine + H(+). It catalyses the reaction a 3-(all-trans-polyprenyl)benzene-1,2-diol + S-adenosyl-L-methionine = a 2-methoxy-6-(all-trans-polyprenyl)phenol + S-adenosyl-L-homocysteine + H(+). It functions in the pathway cofactor biosynthesis; ubiquinone biosynthesis. O-methyltransferase that catalyzes the 2 O-methylation steps in the ubiquinone biosynthetic pathway. The protein is Ubiquinone biosynthesis O-methyltransferase of Aromatoleum aromaticum (strain DSM 19018 / LMG 30748 / EbN1) (Azoarcus sp. (strain EbN1)).